The sequence spans 162 residues: uncharacterized protein (162 aa).

A signal peptide spans 1–24; sequence MCKRFKFLLAVSALFISITVVLAG. Cys-25 carries the N-palmitoyl cysteine lipid modification. Residue Cys-25 is the site of S-diacylglycerol cysteine attachment.

It is found in the cell membrane. This is an uncharacterized protein from Bacillus anthracis.